We begin with the raw amino-acid sequence, 273 residues long: Large ribosomal subunit protein uL2cz/uL2cy (273 aa).

Disordered stretches follow at residues 1–23 (MAIH…SQVK) and 224–273 (NPVD…RRRK).

Belongs to the universal ribosomal protein uL2 family. In terms of assembly, part of the 50S ribosomal subunit.

The protein resides in the plastid. Its subcellular location is the chloroplast. The protein is Large ribosomal subunit protein uL2cz/uL2cy (rpl2-A) of Amborella trichopoda.